Reading from the N-terminus, the 395-residue chain is MGADGTMSPVLTKRRPDQEINKLDIKPNHEVDIARRAPHSKPPFTLSDLRSAIPPHCFHRSLLMSSSYLIRDFALAFLFYHSAVTYIPLLPKPLACMAWPVYWFLQGSNMLGIWVIAHECGHQAFSNYGWVNDAVGFFLHTSLLVPYFPFKYSHRRHHSNTNSVEHDEVFVPRHKDGVQWYYRFFNNTPGRVLTLTLTLLVGWPSYLAFNASGRPYDGFASHYNPNAQIFNLRERFWVHVSNIGILAIYYILYRLATTKGLPWLLSIYGVPVLILNAFVVLITFLQHSHPALPHYNSDEWDWLRGALATVDRDYGFLNEVFHDITDTHVIHHLFPTMPHYNAKEATVSIRPILKDYYKFDRTPIWRALWREAKECLYVEADGTGSKGVLWFKSKF.

Helical transmembrane passes span 73-93 (FALA…LPKP) and 97-117 (MAWP…WVIA). Positions 118–122 (HECGH) match the Histidine box-1 motif. Residues 130–150 (WVNDAVGFFLHTSLLVPYFPF) traverse the membrane as a helical segment. The Histidine box-2 signature appears at 154–158 (HRRHH). 3 consecutive transmembrane segments (helical) span residues 192 to 212 (VLTL…FNAS), 236 to 256 (FWVH…YRLA), and 264 to 284 (LLSI…LITF). Positions 328–332 (HVIHH) match the Histidine box-3 motif.

It belongs to the fatty acid desaturase type 1 family.

It localises to the membrane. It carries out the reaction a (9Z,12Z)-octadecadienoyl-containing glycerolipid + 2 Fe(II)-[cytochrome b5] + O2 + 2 H(+) = a (9Z,11E,13Z)-octadeca-9,11,13-trienoyl-containing glycerolipid + 2 Fe(III)-[cytochrome b5] + 2 H2O. It functions in the pathway lipid metabolism; polyunsaturated fatty acid biosynthesis. Converts a single cis double bond at position 12 of linoleate incorporated into phosphatidylcholine into conjugated 11-trans and 13-cis double bonds. Produces punicic acid (18:3(9Z,11E,13Z)) from linoleic acid and conjugated octadecatetraenoic fatty acid from gamma-linolenic acid. No activity with cis- and trans-vaccenic acid, alpha-linolenic acid or homo-gamma-linolenic acid. 16:2(9Z,12Z), 18:3(9Z,12Z,15Z) and 18:2(9Z,12Z) are substrates for the conjugase to form trans-Delta(11) and cis-Delta(13) double bonds. No activity on the cis-Delta(9) double bonds of oleic and palmitoleic acids. The chain is Bifunctional fatty acid conjugase/Delta(12)-oleate desaturase from Punica granatum (Pomegranate).